The chain runs to 387 residues: Chaperone protein DnaJ (387 aa).

Positions 6–71 constitute a J domain; it reads DYYEILGVPR…EKRRKYDQFG (66 aa). The CR-type zinc finger occupies 146 to 228; it reads GCEKEIPIYR…CGGTGTVRRQ (83 aa). Residues Cys-159, Cys-162, Cys-176, Cys-179, Cys-202, Cys-205, Cys-216, and Cys-219 each contribute to the Zn(2+) site. CXXCXGXG motif repeat units follow at residues 159–166, 176–183, 202–209, and 216–223; these read CSVCGGSG, CQKCGGTG, CDACGGVG, and CRECGGTG.

This sequence belongs to the DnaJ family. In terms of assembly, homodimer. Requires Zn(2+) as cofactor.

The protein resides in the cytoplasm. Functionally, participates actively in the response to hyperosmotic and heat shock by preventing the aggregation of stress-denatured proteins and by disaggregating proteins, also in an autonomous, DnaK-independent fashion. Unfolded proteins bind initially to DnaJ; upon interaction with the DnaJ-bound protein, DnaK hydrolyzes its bound ATP, resulting in the formation of a stable complex. GrpE releases ADP from DnaK; ATP binding to DnaK triggers the release of the substrate protein, thus completing the reaction cycle. Several rounds of ATP-dependent interactions between DnaJ, DnaK and GrpE are required for fully efficient folding. Also involved, together with DnaK and GrpE, in the DNA replication of plasmids through activation of initiation proteins. The polypeptide is Chaperone protein DnaJ (Caldicellulosiruptor saccharolyticus (strain ATCC 43494 / DSM 8903 / Tp8T 6331)).